Reading from the N-terminus, the 327-residue chain is Malate dehydrogenase (327 aa).

11–17 lines the NAD(+) pocket; sequence GAAGQIS. 2 residues coordinate substrate: arginine 92 and arginine 98. NAD(+) is bound by residues asparagine 105, glutamine 112, and 129–131; that span reads VGN. 2 residues coordinate substrate: asparagine 131 and arginine 162. Residue histidine 187 is the Proton acceptor of the active site.

It belongs to the LDH/MDH superfamily. MDH type 2 family.

It catalyses the reaction (S)-malate + NAD(+) = oxaloacetate + NADH + H(+). Its function is as follows. Catalyzes the reversible oxidation of malate to oxaloacetate. This is Malate dehydrogenase from Teredinibacter turnerae (strain ATCC 39867 / T7901).